The sequence spans 707 residues: MSELDNKKDKSKDSNKKPKKPGAFSIGNIIIFVIVALLLIWVVFAFLPNNPGTNKSFDGFLKDLQDAARLGDDTIFFRNISFDVVLSRFNVTFVNGATTSSYFVNYPSSVAFQNLQIPGTTFTGLELATLAIANTSASGIGTLNFSGLVTPTNQALAILLSLIPTFLFVGIIFFVYKMQSKANGGMGGFNPGKNQAERIYTKIKFSDIAGNEEVKEEVAELVDYLKNPKKYSASGARIPRGILLGGPPGTGKTLLAKATAGEANVPFYFISGSNFVELFVGVGAKRVRELFKEARKSSPAIIFIDELDAVGRSRGAGIGGGNDEREQTLNQLLVEMDGMTENSGLLVMAATNRTDVLDPALLRPGRFDRTVTVGLPNVKDREAILKLHAKGKRISSEVSFQQLAKRTPGYSGAQLENVINEASLLSVREDTKIITLEQFDEAIDRVMSGPAKKSRVITKEELTAVAYHEAGHAVVGTQLRKGVKVQKITIIPRGSAGGYNLMIPEEEKYNSSKSELIAMITSFMGGRAAEQIIYGEKEVSTGARDDIKKATSIARKMVTEWGMSDLGPIMYEEDTSNPFLGRDYTKNQLFSDHIAREIDTEVRKIILTAEQKAIEVIQENREMLELIKEALLENETIVDEEIQYIAKNLKLPSMRTKAKSENVNQIRNVDELVKEVKDQTLIIKDKNDKKIKDSENNIKTDESLDIK.

The Cytoplasmic segment spans residues 1-25; it reads MSELDNKKDKSKDSNKKPKKPGAFS. The chain crosses the membrane as a helical span at residues 26–46; the sequence is IGNIIIFVIVALLLIWVVFAF. Residues 47-128 are Extracellular-facing; that stretch reads LPNNPGTNKS…GTTFTGLELA (82 aa). The chain crosses the membrane as a helical span at residues 129–149; sequence TLAIANTSASGIGTLNFSGLV. At 150 to 707 the chain is on the cytoplasmic side; the sequence is TPTNQALAIL…IKTDESLDIK (558 aa). Position 246-253 (246-253) interacts with ATP; sequence GPPGTGKT. H468 contacts Zn(2+). E469 is an active-site residue. 2 residues coordinate Zn(2+): H472 and D546.

This sequence in the central section; belongs to the AAA ATPase family. The protein in the C-terminal section; belongs to the peptidase M41 family. In terms of assembly, homohexamer. Zn(2+) is required as a cofactor.

It localises to the cell membrane. Its function is as follows. Acts as a processive, ATP-dependent zinc metallopeptidase for both cytoplasmic and membrane proteins. Plays a role in the quality control of integral membrane proteins. This Mycoplasma mobile (strain ATCC 43663 / 163K / NCTC 11711) (Mesomycoplasma mobile) protein is ATP-dependent zinc metalloprotease FtsH.